The following is a 458-amino-acid chain: DNA repair protein RadA (458 aa).

The C4-type zinc finger occupies Cys11–Cys28. Gly100–Ser107 contributes to the ATP binding site. The RadA KNRFG motif signature appears at Lys256 to Gly260. The lon-protease-like stretch occupies residues Asp355 to Leu458.

This sequence belongs to the RecA family. RadA subfamily.

DNA-dependent ATPase involved in processing of recombination intermediates, plays a role in repairing DNA breaks. Stimulates the branch migration of RecA-mediated strand transfer reactions, allowing the 3' invading strand to extend heteroduplex DNA faster. Binds ssDNA in the presence of ADP but not other nucleotides, has ATPase activity that is stimulated by ssDNA and various branched DNA structures, but inhibited by SSB. Does not have RecA's homology-searching function. The chain is DNA repair protein RadA from Haemophilus influenzae (strain ATCC 51907 / DSM 11121 / KW20 / Rd).